Consider the following 399-residue polypeptide: Zinc finger TRAF-type-containing protein 1 (399 aa).

The segment covering 1-13 has biased composition (gly residues); the sequence is MSGAEEAGGGGPA. A disordered region spans residues 1-21; the sequence is MSGAEEAGGGGPAAGPAGAVP. An RING-type; degenerate zinc finger spans residues 106 to 151; sequence CTVCLDLPKASVYQCTNGHLMCAGCFIHLLADARLKEEQATCPNCR. The TRAF-type zinc finger occupies 152–210; the sequence is CEISKSLCCRNLAVEKAVSELPSECGFCLRQFPRSLLERHQKEECQDRVTQCKYKRIGC.

Belongs to the ZFTRAF1 family. Interacts with LGALS3. Expressed in heart, brain, liver, testis and kidney.

The protein resides in the cytoplasm. It is found in the perinuclear region. The chain is Zinc finger TRAF-type-containing protein 1 from Mus musculus (Mouse).